The following is a 402-amino-acid chain: S-adenosylmethionine synthase (402 aa).

ATP is bound at residue 140–145 (GNGSID).

Belongs to the AdoMet synthase 2 family. Mg(2+) serves as cofactor.

The enzyme catalyses L-methionine + ATP + H2O = S-adenosyl-L-methionine + phosphate + diphosphate. Its pathway is amino-acid biosynthesis; S-adenosyl-L-methionine biosynthesis; S-adenosyl-L-methionine from L-methionine: step 1/1. Catalyzes the formation of S-adenosylmethionine from methionine and ATP. The chain is S-adenosylmethionine synthase from Picrophilus torridus (strain ATCC 700027 / DSM 9790 / JCM 10055 / NBRC 100828 / KAW 2/3).